The chain runs to 240 residues: MPRNAHFRFKQFTVRQDQCAMKVCTDACVLGAWADVEDADRILDIGAGTGLLSLMVAQRNTYAMIDAVEIDAEAFYQAGENVEQSPFHDRITLFHSAVQEFVSEHRYDVIITNPPFFQSDLLSPIDKKNIAHHAKSLDFEELLTAIERLLKPEGKFNILFPVDEGSRFAEKAAHAGWKLTRKLTLFHQEDKKAFRLLMRFERAEVAHNVIVEPDLYIYEKDGVTHDPRFRELLKAFYLKF.

The protein belongs to the methyltransferase superfamily. tRNA (adenine-N(6)-)-methyltransferase family.

It is found in the cytoplasm. It catalyses the reaction adenosine(37) in tRNA1(Val) + S-adenosyl-L-methionine = N(6)-methyladenosine(37) in tRNA1(Val) + S-adenosyl-L-homocysteine + H(+). In terms of biological role, specifically methylates the adenine in position 37 of tRNA(1)(Val) (anticodon cmo5UAC). This chain is tRNA1(Val) (adenine(37)-N6)-methyltransferase, found in Dyadobacter fermentans (strain ATCC 700827 / DSM 18053 / CIP 107007 / KCTC 52180 / NS114).